The following is a 3302-amino-acid chain: Xin actin-binding repeat-containing protein 2 (3302 aa).

Residues 166–204 are disordered; the sequence is NDSEETLKPSSAMGTSSYTSARQSKETSTSSYSNHSLTS. A compositionally biased stretch (polar residues) spans 173-187; sequence KPSSAMGTSSYTSAR. Low complexity predominate over residues 191–204; it reads ETSTSSYSNHSLTS. Xin repeat units follow at residues 306–321, 341–356, 381–396, 418–433, 456–471, 496–511, and 534–549; these read AGVQQARYVFENTNDS, GEVQSIRWIFENQPLD, GDVKYTTWMFETQPID, GDVCTARWMFETRPLD, GDVKTVRYMFETQQLD, GNVKRSIKCFETQPLY, and GDVRTARWMFETQPLD. A Phosphoserine modification is found at serine 565. Xin repeat units follow at residues 572–587 and 606–621; these read GEVGRARWLFETQPLE and IDVSKKCWMFETQPLD. Serine 633 bears the Phosphoserine mark. Xin repeat units follow at residues 640 to 655, 677 to 692, 713 to 728, 744 to 759, and 782 to 797; these read GDVKTTKHLLETLPIE, GDVKHQKWVFETQRLE, GHVKNYTHIFESNNLI, GTVELNKSLFETTPLY, and GDVRSCRWLFETRPID. Serine 813 carries the phosphoserine modification. Xin repeat units follow at residues 820–835, 859–874, 892–907, 930–945, 965–980, 1004–1019, 1040–1055, 1077–1092, 1115–1130, 1152–1167, and 1186–1201; these read GNVKSARWLFETQPLD, GDVKTCKWLFETQPME, GDVRTCMWLFETQPLD, GDVRTACLLFETENLD, GDVSGMKYKFENQSLD, GNVLNCRWLFENQPID, GDVRKGCFIFETFSLD, GDVKSYKMLFETQPLY, GDVRGTRWLFETKPLD, GDVSSVRYRFETQPLD, and GNVQMNKQLFESEGGD. Residue serine 1210 is modified to Phosphoserine. 3 Xin repeats span residues 1217–1232, 1254–1269, and 1289–1304; these read GNVKTSTWLFETHSID, GDVKQAVWLFENQTLD, and SDVKTTTWLFETTPIH. Residue serine 1573 is modified to Phosphoserine. Disordered stretches follow at residues 1848-1882, 1920-1939, 1957-2002, 2039-2296, 2311-2378, 2546-2593, and 2626-2687; these read VSASMSRKKSLKTKESENVRESKDDVSSTQSVDKT, AETQSYRPDPTQHPVSNPAG, EKQN…APDK, YPDC…KPYM, RQQR…SKAV, YAAK…ESRV, and NFQQ…RESQ. Positions 1859–1873 are enriched in basic and acidic residues; that stretch reads KTKESENVRESKDDV. Phosphothreonine is present on threonine 1930. A Phosphoserine modification is found at serine 1935. Basic and acidic residues predominate over residues 1957-1969; sequence EKQNSNKDMRKND. Pro residues-rich tracts occupy residues 2051 to 2062 and 2125 to 2134; these read LPPPSPPPPPPS and SLPPPPPTAP. Residues 2135–2145 are compositionally biased toward low complexity; sequence SQPAHLLSSSV. A Phosphoserine modification is found at serine 2158. Basic and acidic residues predominate over residues 2158–2167; it reads SRKETLDSHQ. The segment at 2181–2186 is interacts with NEBL; it reads PPTLPK. A phosphoserine mark is found at serine 2198, serine 2211, and serine 2252. Basic and acidic residues predominate over residues 2205–2243; sequence ELERSLSDVEIKTTLSKDQKSSLVAESREHTEAKQEVFR. Polar residues-rich tracts occupy residues 2251–2263 and 2282–2292; these read LSISSANSLSQTV and SFPSGSEQQSP. Positions 2303 to 2328 form a coiled coil; it reads LMIAEEKYRQQREELEKQRRESSCHS. 2 stretches are compositionally biased toward basic and acidic residues: residues 2311 to 2325 and 2333 to 2350; these read RQQREELEKQRRESS and ETQHRSLSEKEKETELQK. The span at 2626-2635 shows a compositional bias: polar residues; sequence NFQQTQTQTS. Basic and acidic residues predominate over residues 2636–2659; the sequence is RIEHKELSQPYSEKKCLRDKDKQQ. Positions 2674 to 2685 are enriched in polar residues; it reads TQKQSSFSSVRE. Coiled coils occupy residues 2696–2724 and 2751–2777; these read NILEFLRKREELQQILSRVKQFEADSNKS and RVAMENNLEKVKEEIIHIKTQAEEMLV. A disordered region spans residues 2835-2934; sequence RQVATHSEAA…PSPPRSRSEQ (100 aa). Composition is skewed to polar residues over residues 2836–2850 and 2891–2903; these read QVATHSEAATHNPAK and KSELSQSPKNNSC. Basic and acidic residues predominate over residues 2907–2916; it reads LPRRPMEHTS. 2 positions are modified to phosphoserine: serine 2987 and serine 3225. Residues 3278–3302 form a disordered region; the sequence is QGNLHNLSKDGLSNGVPRSRPAEFS.

Belongs to the Xin family. As to quaternary structure, interacts with ACTN2. Interacts with F-actin. Interacts with NEBL (via SH3 domain). Interacts with Kcna5/Kv1.5 and Scn5a/Nav1.5; the interactions are required for normal action potential configuration in the heart.

The protein resides in the cell junction. Functionally, protects actin filaments from depolymerization. Required for correct morphology of cell membranes and maturation of intercalated disks of cardiomyocytes via facilitating localization of XIRP1 and CDH2 to the termini of aligned mature cardiomyocytes. Thereby required for correct postnatal heart development and growth regulation that is crucial for overall heart morphology and diastolic function. Required for normal electrical conduction in the heart including formation of the infranodal ventricular conduction system and normal action potential configuration, as a result of its interaction with the cardiac ion channel components Scn5a/Nav1.5 and Kcna5/Kv1.5. Required for regular actin filament spacing of the paracrystalline array in both inner and outer hair cells of the cochlea, thereby required for maintenance of stereocilia morphology. The sequence is that of Xin actin-binding repeat-containing protein 2 from Rattus norvegicus (Rat).